The chain runs to 420 residues: Serine hydroxymethyltransferase (420 aa).

(6S)-5,6,7,8-tetrahydrofolate-binding positions include leucine 121 and 125-127; that span reads GHL. Residue lysine 230 is modified to N6-(pyridoxal phosphate)lysine. (6S)-5,6,7,8-tetrahydrofolate is bound at residue 355-357; the sequence is SPF.

The protein belongs to the SHMT family. In terms of assembly, homodimer. It depends on pyridoxal 5'-phosphate as a cofactor.

The protein resides in the cytoplasm. The enzyme catalyses (6R)-5,10-methylene-5,6,7,8-tetrahydrofolate + glycine + H2O = (6S)-5,6,7,8-tetrahydrofolate + L-serine. Its pathway is one-carbon metabolism; tetrahydrofolate interconversion. The protein operates within amino-acid biosynthesis; glycine biosynthesis; glycine from L-serine: step 1/1. In terms of biological role, catalyzes the reversible interconversion of serine and glycine with tetrahydrofolate (THF) serving as the one-carbon carrier. This reaction serves as the major source of one-carbon groups required for the biosynthesis of purines, thymidylate, methionine, and other important biomolecules. Also exhibits THF-independent aldolase activity toward beta-hydroxyamino acids, producing glycine and aldehydes, via a retro-aldol mechanism. In Streptococcus gordonii (strain Challis / ATCC 35105 / BCRC 15272 / CH1 / DL1 / V288), this protein is Serine hydroxymethyltransferase.